Here is a 165-residue protein sequence, read N- to C-terminus: Small ribosomal subunit protein uS5 (165 aa).

In terms of domain architecture, S5 DRBM spans 10–73 (LVEKLVAVDR…EAARRNMITV (64 aa)).

It belongs to the universal ribosomal protein uS5 family. Part of the 30S ribosomal subunit. Contacts proteins S4 and S8.

In terms of biological role, with S4 and S12 plays an important role in translational accuracy. Located at the back of the 30S subunit body where it stabilizes the conformation of the head with respect to the body. This is Small ribosomal subunit protein uS5 from Acinetobacter baylyi (strain ATCC 33305 / BD413 / ADP1).